We begin with the raw amino-acid sequence, 947 residues long: Protein translocase subunit SecA 1 (947 aa).

ATP-binding positions include glutamine 87, 105 to 109, and aspartate 525; that span reads GEGKT. The interval 907–937 is disordered; that stretch reads DDADKAARDPNRPETWGKVGRNEDCPCNSGK. A compositionally biased stretch (basic and acidic residues) spans 908 to 918; the sequence is DADKAARDPNR. 4 residues coordinate Zn(2+): cysteine 931, cysteine 933, cysteine 942, and histidine 943.

This sequence belongs to the SecA family. As to quaternary structure, monomer and homodimer. Part of the essential Sec protein translocation apparatus which comprises SecA, SecYEG and auxiliary proteins SecDF-YajC and YidC. The cofactor is Zn(2+).

It localises to the cell inner membrane. It is found in the cytoplasm. It catalyses the reaction ATP + H2O + cellular proteinSide 1 = ADP + phosphate + cellular proteinSide 2.. Part of the Sec protein translocase complex. Interacts with the SecYEG preprotein conducting channel. Has a central role in coupling the hydrolysis of ATP to the transfer of proteins into and across the cell membrane, serving both as a receptor for the preprotein-SecB complex and as an ATP-driven molecular motor driving the stepwise translocation of polypeptide chains across the membrane. The chain is Protein translocase subunit SecA 1 from Rhodopseudomonas palustris (strain BisA53).